Consider the following 97-residue polypeptide: Putative septation protein SpoVG (97 aa).

Belongs to the SpoVG family.

Its function is as follows. Could be involved in septation. This Borreliella afzelii (strain PKo) (Borrelia afzelii) protein is Putative septation protein SpoVG.